We begin with the raw amino-acid sequence, 360 residues long: Phosphoserine aminotransferase (360 aa).

Residue arginine 41 coordinates L-glutamate. 4 residues coordinate pyridoxal 5'-phosphate: tryptophan 101, threonine 152, aspartate 172, and glutamine 195. Lysine 196 carries the post-translational modification N6-(pyridoxal phosphate)lysine. 237–238 is a pyridoxal 5'-phosphate binding site; sequence NT.

Belongs to the class-V pyridoxal-phosphate-dependent aminotransferase family. SerC subfamily. Homodimer. The cofactor is pyridoxal 5'-phosphate.

It localises to the cytoplasm. It catalyses the reaction O-phospho-L-serine + 2-oxoglutarate = 3-phosphooxypyruvate + L-glutamate. The catalysed reaction is 4-(phosphooxy)-L-threonine + 2-oxoglutarate = (R)-3-hydroxy-2-oxo-4-phosphooxybutanoate + L-glutamate. It participates in amino-acid biosynthesis; L-serine biosynthesis; L-serine from 3-phospho-D-glycerate: step 2/3. Its pathway is cofactor biosynthesis; pyridoxine 5'-phosphate biosynthesis; pyridoxine 5'-phosphate from D-erythrose 4-phosphate: step 3/5. Functionally, catalyzes the reversible conversion of 3-phosphohydroxypyruvate to phosphoserine and of 3-hydroxy-2-oxo-4-phosphonooxybutanoate to phosphohydroxythreonine. The sequence is that of Phosphoserine aminotransferase from Paraburkholderia phytofirmans (strain DSM 17436 / LMG 22146 / PsJN) (Burkholderia phytofirmans).